Consider the following 455-residue polypeptide: MAAPEEHDSPTEASQPIVEEEETKTFKDLGVTDVLCEACDQLGWTKPTKIQIEAIPLALQGRDIIGLAETGSGKTGAFALPILNALLETPQRLFALVLTPTRELAFQISEQFEALGSSIGVQSAVIVGGIDSMSQSLALAKKPHIIIATPGRLIDHLENTKGFNLRALKYLVMDEADRILNMDFETEVDKILKVIPRDRKTFLFSATMTKKVQKLQRAALKNPVKCAVSSKYQTVEKLQQYYIFIPSKFKDTYLVYILNELAGNSFMIFCSTCNNTQRTALLLRNLGFTAIPLHGQMSQSKRLGSLNKFKAKARSILLATDVASRGLDIPHVDVVVNFDIPTHSKDYIHRVGRTARAGRSGKAITFVTQYDVELFQRIEHLIGKKLPGFPTQDDEVMMLTERVAEAQRFARMELREHGEKKKRSREDAGDNDDTEGAIGVRNKVAGGKMKKRKGR.

Over residues 1–10 (MAAPEEHDSP) the composition is skewed to basic and acidic residues. The segment at 1 to 20 (MAAPEEHDSPTEASQPIVEE) is disordered. An N-acetylalanine modification is found at A2. The residue at position 9 (S9) is a Phosphoserine. The Q motif signature appears at 24 to 52 (KTFKDLGVTDVLCEACDQLGWTKPTKIQI). The Helicase ATP-binding domain occupies 55–226 (IPLALQGRDI…RAALKNPVKC (172 aa)). An ATP-binding site is contributed by 68–75 (AETGSGKT). Phosphothreonine is present on T149. A DEAD box motif is present at residues 174-177 (DEAD). The Helicase C-terminal domain occupies 237–397 (KLQQYYIFIP…GFPTQDDEVM (161 aa)). A compositionally biased stretch (basic and acidic residues) spans 413 to 428 (ELREHGEKKKRSREDA). Positions 413 to 455 (ELREHGEKKKRSREDAGDNDDTEGAIGVRNKVAGGKMKKRKGR) are disordered. S424 is modified (phosphoserine).

Belongs to the DEAD box helicase family. DDX47/RRP3 subfamily. Interacts with AGO1 and AGO2. Interacts with GABARAP. Interacts with NOL8; the interaction is RNA-dependent. Expressed in skin, lung and breast. Also expressed in the brain.

The protein localises to the nucleus. The protein resides in the nucleolus. It carries out the reaction ATP + H2O = ADP + phosphate + H(+). Functionally, required for efficient ribosome biogenesis. May have a role in mRNA splicing. Involved in apoptosis. This chain is Probable ATP-dependent RNA helicase DDX47 (DDX47), found in Homo sapiens (Human).